A 418-amino-acid polypeptide reads, in one-letter code: UDP-N-acetylglucosamine 1-carboxyvinyltransferase (418 aa).

Residue 22–23 (KN) participates in phosphoenolpyruvate binding. R93 contacts UDP-N-acetyl-alpha-D-glucosamine. The active-site Proton donor is the C117. 2-(S-cysteinyl)pyruvic acid O-phosphothioketal is present on C117. UDP-N-acetyl-alpha-D-glucosamine is bound by residues 122 to 126 (RPIDL), D306, and L328.

It belongs to the EPSP synthase family. MurA subfamily.

The protein resides in the cytoplasm. The enzyme catalyses phosphoenolpyruvate + UDP-N-acetyl-alpha-D-glucosamine = UDP-N-acetyl-3-O-(1-carboxyvinyl)-alpha-D-glucosamine + phosphate. The protein operates within cell wall biogenesis; peptidoglycan biosynthesis. Cell wall formation. Adds enolpyruvyl to UDP-N-acetylglucosamine. The protein is UDP-N-acetylglucosamine 1-carboxyvinyltransferase of Campylobacter hominis (strain ATCC BAA-381 / DSM 21671 / CCUG 45161 / LMG 19568 / NCTC 13146 / CH001A).